The primary structure comprises 306 residues: ATP synthase gamma chain (306 aa).

This sequence belongs to the ATPase gamma chain family. F-type ATPases have 2 components, CF(1) - the catalytic core - and CF(0) - the membrane proton channel. CF(1) has five subunits: alpha(3), beta(3), gamma(1), delta(1), epsilon(1). CF(0) has three main subunits: a, b and c.

It localises to the cell membrane. In terms of biological role, produces ATP from ADP in the presence of a proton gradient across the membrane. The gamma chain is believed to be important in regulating ATPase activity and the flow of protons through the CF(0) complex. The protein is ATP synthase gamma chain of Bifidobacterium adolescentis (strain ATCC 15703 / DSM 20083 / NCTC 11814 / E194a).